The primary structure comprises 259 residues: Ribosomal RNA large subunit methyltransferase E (259 aa).

S-adenosyl-L-methionine contacts are provided by Gly49, Trp51, Asp69, Asp88, and Asp112. The Proton acceptor role is filled by Lys152. Residues 199–257 (PIAEGDEHTVEIVDTGDEGDGIARIEGYTLFVDDAAEGDTVDVTVTDLKPNYGFAERRD) enclose the TRAM domain.

The protein belongs to the class I-like SAM-binding methyltransferase superfamily. RNA methyltransferase RlmE family.

It localises to the cytoplasm. It carries out the reaction uridine(2552) in 23S rRNA + S-adenosyl-L-methionine = 2'-O-methyluridine(2552) in 23S rRNA + S-adenosyl-L-homocysteine + H(+). In terms of biological role, specifically methylates the uridine in position 2552 of 23S rRNA at the 2'-O position of the ribose in the fully assembled 50S ribosomal subunit. This Halobacterium salinarum (strain ATCC 29341 / DSM 671 / R1) protein is Ribosomal RNA large subunit methyltransferase E.